A 117-amino-acid chain; its full sequence is Non-specific lipid-transfer protein 1 (117 aa).

Positions 1–25 are cleaved as a signal peptide; the sequence is MAGLVKLSCLVLACMIVAGPIATNA. 4 disulfide bridges follow: Cys29/Cys76, Cys39/Cys53, Cys54/Cys99, and Cys74/Cys113.

Belongs to the plant LTP family.

Its function is as follows. Plant non-specific lipid-transfer proteins transfer phospholipids as well as galactolipids across membranes. May play a role in wax or cutin deposition in the cell walls of expanding epidermal cells and certain secretory tissues. The polypeptide is Non-specific lipid-transfer protein 1 (LTP1) (Brassica napus (Rape)).